Consider the following 794-residue polypeptide: Zinc finger protein 148 (794 aa).

Lys6 is covalently cross-linked (Glycyl lysine isopeptide (Lys-Gly) (interchain with G-Cter in SUMO2)). The residue at position 51 (Ser51) is a Phosphoserine. Residues Lys88, Lys115, and Lys132 each participate in a glycyl lysine isopeptide (Lys-Gly) (interchain with G-Cter in SUMO2) cross-link. The C2H2-type 1 zinc-finger motif lies at 171 to 193 (HVCEHCNAAFRTNYHLQRHVFIH). Thr194 carries the phosphothreonine modification. C2H2-type zinc fingers lie at residues 199–221 (FQCSQCDMRFIQKYLLQRHEKIH) and 227–249 (FRCDECGMRFIQKYHMERHKRTH). A Phosphoserine modification is found at Ser250. A C2H2-type 4 zinc finger spans residues 255–278 (YQCEYCLQYFSRTDRVLKHKRMCH). Lys291 is covalently cross-linked (Glycyl lysine isopeptide (Lys-Gly) (interchain with G-Cter in SUMO2)). The interval 298–336 (EEDSGFSTSPKDNSLPKKKRQKTEKKSSGMDKESVLDKS) is disordered. A phosphoserine mark is found at Ser301 and Ser306. Residue Lys308 forms a Glycyl lysine isopeptide (Lys-Gly) (interchain with G-Cter in SUMO2) linkage. Residues 321–336 (EKKSSGMDKESVLDKS) show a composition bias toward basic and acidic residues. Lys356 is covalently cross-linked (Glycyl lysine isopeptide (Lys-Gly) (interchain with G-Cter in SUMO1); alternate). Lys356 participates in a covalent cross-link: Glycyl lysine isopeptide (Lys-Gly) (interchain with G-Cter in SUMO2); alternate. Residue Lys402 forms a Glycyl lysine isopeptide (Lys-Gly) (interchain with G-Cter in SUMO2) linkage. Phosphoserine is present on Ser412. Residues Lys421 and Lys424 each participate in a glycyl lysine isopeptide (Lys-Gly) (interchain with G-Cter in SUMO2) cross-link. Positions 574–588 (NSSDVPEVTQSENVG) are enriched in polar residues. Residues 574–599 (NSSDVPEVTQSENVGSSSQASSSDKA) are disordered. Lys607 is subject to N6-acetyllysine. Phosphoserine is present on residues Ser665 and Ser784.

This sequence belongs to the krueppel C2H2-type zinc-finger protein family. Interacts with HNRNPDL. Interacts with the 5FMC complex; the interaction requires association with CHTOP. Interacts with CAVIN1. Sumoylated with SUMO2. Desumoylated by SENP3, resulting in the stimulation of transcription of its target genes. In terms of tissue distribution, strong expression detected in brain, lung, liver and kidney, with lower levels detected in spleen, skeletal muscle, testis and heart.

It is found in the nucleus. In terms of biological role, involved in transcriptional regulation. Represses the transcription of a number of genes including gastrin, stromelysin and enolase. Binds to the G-rich box in the enhancer region of these genes. The chain is Zinc finger protein 148 (Znf148) from Mus musculus (Mouse).